The chain runs to 767 residues: Tetratricopeptide repeat protein 16 (767 aa).

TPR repeat units follow at residues 18-51 (VREY…DPKL), 53-85 (DFYV…DPGN), 93-126 (AFVL…QPQN), 128-155 (SFSY…REVK), 208-241 (AKQS…NPLD), 242-275 (PNFF…VTDT), 288-321 (LLTY…EQNE), 322-355 (KGLY…SPLD), and 363-396 (GVLQ…SPQK). The interval 612 to 733 (EVTPAYGQRD…DSLSFSEISS (122 aa)) is disordered. Polar residues predominate over residues 684 to 718 (QRSSQKVTKTPSLTHSTTHSDIGESANDTPGQTPW).

The chain is Tetratricopeptide repeat protein 16 (Ttc16) from Mus musculus (Mouse).